We begin with the raw amino-acid sequence, 307 residues long: Dihydroorotate dehydrogenase A (fumarate) (307 aa).

FMN-binding positions include S21 and K46–T47. Residues K46, N70 to L74, and N130 contribute to the substrate site. Residue N130 coordinates FMN. The active-site Nucleophile is the C133. Positions 168 and 194 each coordinate FMN. N195–T196 provides a ligand contact to substrate. FMN is bound by residues G220, G246–G247, and G268–S269.

This sequence belongs to the dihydroorotate dehydrogenase family. Type 1 subfamily. In terms of assembly, homodimer. The cofactor is FMN.

Its subcellular location is the cytoplasm. The catalysed reaction is (S)-dihydroorotate + fumarate = orotate + succinate. It participates in pyrimidine metabolism; UMP biosynthesis via de novo pathway. In terms of biological role, catalyzes the conversion of dihydroorotate to orotate with fumarate as the electron acceptor. This chain is Dihydroorotate dehydrogenase A (fumarate) (pyrD), found in Lactobacillus delbrueckii subsp. bulgaricus (strain ATCC BAA-365 / Lb-18).